We begin with the raw amino-acid sequence, 675 residues long: NADH-ubiquinone oxidoreductase chain 5 (675 aa).

The next 19 membrane-spanning stretches (helical) occupy residues 3 to 23 (LLPL…GKFL), 27 to 47 (VLFV…WIFY), 75 to 95 (FLFD…SLLV), 108 to 127 (HIIR…LMLV), 132 to 154 (FVQL…NFWY), 177 to 197 (IYFS…GVVF), 211 to 231 (FLGF…LGAI), 251 to 271 (TPVS…FVLI), 284 to 304 (LFLV…VGLV), 311 to 329 (VIAY…ACGM), 334 to 354 (VGLF…LGAG), 380 to 400 (YVAI…TGFY), 413 to 433 (FSIN…ITSF), 462 to 482 (SFIF…GFIF), 519 to 539 (LIPL…YFVI), 564 to 584 (YFDL…FYLL), 593 to 613 (LIEL…SIIF), 624 to 644 (YIFV…SLFF), and 649 to 669 (SFFN…LSFG).

The protein belongs to the complex I subunit 5 family.

It is found in the mitochondrion inner membrane. It catalyses the reaction a ubiquinone + NADH + 5 H(+)(in) = a ubiquinol + NAD(+) + 4 H(+)(out). Its function is as follows. Core subunit of the mitochondrial membrane respiratory chain NADH dehydrogenase (Complex I) that is believed to belong to the minimal assembly required for catalysis. Complex I functions in the transfer of electrons from NADH to the respiratory chain. The immediate electron acceptor for the enzyme is believed to be ubiquinone. In Acanthamoeba castellanii (Amoeba), this protein is NADH-ubiquinone oxidoreductase chain 5 (ND5).